Reading from the N-terminus, the 153-residue chain is Histone H2B.8 (153 aa).

2 stretches are compositionally biased toward basic and acidic residues: residues 1 to 28 (MAPK…EKAP) and 36 to 53 (EKRL…EGKK). Residues 1 to 61 (MAPKAEKKPA…KKAGRKKAKK (61 aa)) are disordered. Residues lysine 7 and lysine 37 each carry the N6-acetyllysine modification. A Glycyl lysine isopeptide (Lys-Gly) (interchain with G-Cter in ubiquitin) cross-link involves residue lysine 149.

The protein belongs to the histone H2B family. The nucleosome is a histone octamer containing two molecules each of H2A, H2B, H3 and H4 assembled in one H3-H4 heterotetramer and two H2A-H2B heterodimers. The octamer wraps approximately 147 bp of DNA. Post-translationally, can be acetylated to form H2BK6ac and H2BK33ac. Monoubiquitinated by BRE1 to form H2BK143ub1 and deubiquitinated by UBP26. Required for heterochromatic histone H3 di- and trimethylation at H3K4me. May give a specific tag for epigenetic transcriptional activation.

It localises to the nucleus. Its subcellular location is the chromosome. Functionally, core component of nucleosome. Nucleosomes wrap and compact DNA into chromatin, limiting DNA accessibility to the cellular machineries which require DNA as a template. Histones thereby play a central role in transcription regulation, DNA repair, DNA replication and chromosomal stability. DNA accessibility is regulated via a complex set of post-translational modifications of histones, also called histone code, and nucleosome remodeling. In Oryza sativa subsp. indica (Rice), this protein is Histone H2B.8 (H2B.8).